We begin with the raw amino-acid sequence, 278 residues long: E3 ubiquitin-protein ligase CHIP (278 aa).

3 TPR repeats span residues 10-43 (AERL…SPNV), 45-77 (AYWT…VHNS), and 78-111 (VKAH…GRCS). The stretch at 143–194 (ELNSLKETCEAALNQQRALDMSRTEESSDEAYTAHTERLKALERVFKKAAEE) forms a coiled coil. One can recognise a U-box domain in the interval 199-273 (EVPDYLCCNI…AAYLEKHVWA (75 aa)).

In terms of assembly, interacts with HSC70-4, PP2AA1, PP2AA3 and PP2A5, as well as with UBC8, UBC9 and UBC10. Also interacts with the chloroplastic proteolytic subunits ClpP4, FtsH1 and FtsH2.

The enzyme catalyses S-ubiquitinyl-[E2 ubiquitin-conjugating enzyme]-L-cysteine + [acceptor protein]-L-lysine = [E2 ubiquitin-conjugating enzyme]-L-cysteine + N(6)-ubiquitinyl-[acceptor protein]-L-lysine.. The protein operates within protein modification; protein ubiquitination. In terms of biological role, has E3 ubiquitin-protein ligase activity and may target misfolded substrates towards proteasomal degradation. Regulates the activity of some serine/threonine-protein phosphatases by E3 ubiquitin-protein ligase activity. Required for responses to biotic and abiotic stresses such as auxin, abscisic acid (ABA), low and high temperature and darkness, probably through the activation of serine/threonine-protein phosphatase and the subsequent modification of the plasma membrane composition. Regulates the chloroplastic Clp proteolytic activity in response to stresses. Ubiquitylates FtsH1, a component of the chloroplast FtsH protease, and affects protein degradation in chloroplasts. Mediates plastid precursor degradation to prevent cytosolic precursor accumulation, together with the molecular chaperone HSC70-4. Mediates ubiquitination of transit peptides and thereby led to their degradation through the ubiquitin-proteasome system. This Arabidopsis thaliana (Mouse-ear cress) protein is E3 ubiquitin-protein ligase CHIP.